Consider the following 365-residue polypeptide: Phospho-N-acetylmuramoyl-pentapeptide-transferase (365 aa).

A run of 10 helical transmembrane segments spans residues 19-39, 49-69, 92-112, 116-136, 156-176, 183-203, 215-235, 238-258, 279-299, and 345-365; these read TLLILLWALALALMALLSSWA, LLIALGFTALVTALIGMAVVP, AGTPTMGGIFFVPVAVAIAVV, FNPDVIVVGLVTLGYMAIGWV, LFLQVAIAVIFCTWLFFYGPT, IMQFVLPLGFLFWLVATFALV, VDGLAAGTGAIAFVGLGLLVA, NPALAFFCCAMAGGCIGFVHH, LAAVGIMTGNLWGLLLISGIF, and QIVGSFYLINTLLAIVAMATA.

It belongs to the glycosyltransferase 4 family. MraY subfamily. It depends on Mg(2+) as a cofactor.

Its subcellular location is the cell inner membrane. The enzyme catalyses UDP-N-acetyl-alpha-D-muramoyl-L-alanyl-gamma-D-glutamyl-meso-2,6-diaminopimeloyl-D-alanyl-D-alanine + di-trans,octa-cis-undecaprenyl phosphate = di-trans,octa-cis-undecaprenyl diphospho-N-acetyl-alpha-D-muramoyl-L-alanyl-D-glutamyl-meso-2,6-diaminopimeloyl-D-alanyl-D-alanine + UMP. It participates in cell wall biogenesis; peptidoglycan biosynthesis. Its function is as follows. Catalyzes the initial step of the lipid cycle reactions in the biosynthesis of the cell wall peptidoglycan: transfers peptidoglycan precursor phospho-MurNAc-pentapeptide from UDP-MurNAc-pentapeptide onto the lipid carrier undecaprenyl phosphate, yielding undecaprenyl-pyrophosphoryl-MurNAc-pentapeptide, known as lipid I. This chain is Phospho-N-acetylmuramoyl-pentapeptide-transferase, found in Synechocystis sp. (strain ATCC 27184 / PCC 6803 / Kazusa).